The chain runs to 269 residues: Putative phosphoenolpyruvate synthase regulatory protein (269 aa).

Position 149-156 (149-156 (GVSRSGKT)) interacts with ADP.

It belongs to the pyruvate, phosphate/water dikinase regulatory protein family. PSRP subfamily.

It carries out the reaction [pyruvate, water dikinase] + ADP = [pyruvate, water dikinase]-phosphate + AMP + H(+). It catalyses the reaction [pyruvate, water dikinase]-phosphate + phosphate + H(+) = [pyruvate, water dikinase] + diphosphate. Bifunctional serine/threonine kinase and phosphorylase involved in the regulation of the phosphoenolpyruvate synthase (PEPS) by catalyzing its phosphorylation/dephosphorylation. The protein is Putative phosphoenolpyruvate synthase regulatory protein of Pseudoalteromonas translucida (strain TAC 125).